Reading from the N-terminus, the 570-residue chain is Urease subunit alpha (570 aa).

One can recognise a Urease domain in the interval 131 to 570 (GGMDSHIHFI…LPMAQRYFLF (440 aa)). Ni(2+)-binding residues include histidine 136, histidine 138, and lysine 219. At lysine 219 the chain carries N6-carboxylysine. Histidine 221 is a binding site for substrate. Histidine 248 and histidine 274 together coordinate Ni(2+). Histidine 322 serves as the catalytic Proton donor. Position 362 (aspartate 362) interacts with Ni(2+).

Belongs to the metallo-dependent hydrolases superfamily. Urease alpha subunit family. As to quaternary structure, heterotrimer of UreA (gamma), UreB (beta) and UreC (alpha) subunits. Three heterotrimers associate to form the active enzyme. Ni cation serves as cofactor. In terms of processing, carboxylation allows a single lysine to coordinate two nickel ions.

The protein localises to the cytoplasm. The enzyme catalyses urea + 2 H2O + H(+) = hydrogencarbonate + 2 NH4(+). Its pathway is nitrogen metabolism; urea degradation; CO(2) and NH(3) from urea (urease route): step 1/1. This chain is Urease subunit alpha, found in Rhizobium meliloti (strain 1021) (Ensifer meliloti).